Reading from the N-terminus, the 430-residue chain is DNA repair protein recA homolog 3, mitochondrial (430 aa).

Residues 1–35 constitute a mitochondrion transit peptide; sequence MARILRNVYSLRSSLFSSELLRRSVVGTSFQLRGF. 119–126 is a binding site for ATP; the sequence is GPEASGKT. A disordered region spans residues 385–415; that stretch reads DEAADKETESESEEEDSLRVVVSPDNTDDES.

This sequence belongs to the RecA family.

It is found in the mitochondrion. In terms of biological role, involved in recombination ability and DNA strand transfer activity. The protein is DNA repair protein recA homolog 3, mitochondrial of Arabidopsis thaliana (Mouse-ear cress).